We begin with the raw amino-acid sequence, 177 residues long: Putative pre-16S rRNA nuclease (177 aa).

The protein belongs to the YqgF nuclease family.

It localises to the cytoplasm. In terms of biological role, could be a nuclease involved in processing of the 5'-end of pre-16S rRNA. The sequence is that of Putative pre-16S rRNA nuclease from Psychrobacter sp. (strain PRwf-1).